The chain runs to 192 residues: UPF0301 protein Bamb_0737 (192 aa).

It belongs to the UPF0301 (AlgH) family.

The chain is UPF0301 protein Bamb_0737 from Burkholderia ambifaria (strain ATCC BAA-244 / DSM 16087 / CCUG 44356 / LMG 19182 / AMMD) (Burkholderia cepacia (strain AMMD)).